We begin with the raw amino-acid sequence, 290 residues long: Bifunctional protein FolD (290 aa).

Residues 164–166 (GRS), Ser193, and Ile234 contribute to the NADP(+) site.

It belongs to the tetrahydrofolate dehydrogenase/cyclohydrolase family. As to quaternary structure, homodimer.

The enzyme catalyses (6R)-5,10-methylene-5,6,7,8-tetrahydrofolate + NADP(+) = (6R)-5,10-methenyltetrahydrofolate + NADPH. The catalysed reaction is (6R)-5,10-methenyltetrahydrofolate + H2O = (6R)-10-formyltetrahydrofolate + H(+). The protein operates within one-carbon metabolism; tetrahydrofolate interconversion. Functionally, catalyzes the oxidation of 5,10-methylenetetrahydrofolate to 5,10-methenyltetrahydrofolate and then the hydrolysis of 5,10-methenyltetrahydrofolate to 10-formyltetrahydrofolate. The chain is Bifunctional protein FolD from Cytophaga hutchinsonii (strain ATCC 33406 / DSM 1761 / CIP 103989 / NBRC 15051 / NCIMB 9469 / D465).